The primary structure comprises 1234 residues: ATP-dependent helicase/nuclease subunit A (1234 aa).

The region spanning 2-475 is the UvrD-like helicase ATP-binding domain; the sequence is TQFTTSQQAA…IILAENFRST (474 aa). 23 to 30 provides a ligand contact to ATP; the sequence is ASAGSGKT. The UvrD-like helicase C-terminal domain occupies 507 to 806; it reads YGALDYGDAH…KLMTIHKSKG (300 aa).

Belongs to the helicase family. AddA subfamily. In terms of assembly, heterodimer of AddA and AddB/RexB. It depends on Mg(2+) as a cofactor.

The enzyme catalyses Couples ATP hydrolysis with the unwinding of duplex DNA by translocating in the 3'-5' direction.. It carries out the reaction ATP + H2O = ADP + phosphate + H(+). Its function is as follows. The heterodimer acts as both an ATP-dependent DNA helicase and an ATP-dependent, dual-direction single-stranded exonuclease. Recognizes the chi site generating a DNA molecule suitable for the initiation of homologous recombination. The AddA nuclease domain is required for chi fragment generation; this subunit has the helicase and 3' -&gt; 5' nuclease activities. This is ATP-dependent helicase/nuclease subunit A from Lacticaseibacillus casei (strain BL23) (Lactobacillus casei).